The chain runs to 323 residues: ATP synthase gamma chain (323 aa).

Residues 206–240 (NPIVNLVGFGYKERGVKPINNRRATSDIVGESKSI) are insert.

It belongs to the ATPase gamma chain family. As to quaternary structure, F-type ATPases have 2 components, CF(1) - the catalytic core - and CF(0) - the membrane proton channel. CF(1) has five subunits: alpha(3), beta(3), gamma(1), delta(1), epsilon(1). CF(0) has three main subunits: a, b and c.

The protein localises to the cell inner membrane. Functionally, produces ATP from ADP in the presence of a proton gradient across the membrane. The gamma chain is believed to be important in regulating ATPase activity and the flow of protons through the CF(0) complex. In Rickettsia conorii (strain ATCC VR-613 / Malish 7), this protein is ATP synthase gamma chain.